The following is a 181-amino-acid chain: MAKLHDLYKDTVVAELQKQFGYKSVMQVPRIEKITLNMGVGEAISDKKVLEHATNDLTAISGQKPITTVARKSVAGFKIREGYPIGTKVTLRGERMWEFLERLISISIPRIRDFRGLNPKSFDGRGNYSMGVREQIIFPEIEYDKIDKIRGLDITITTSAKDNEEGLALLSAFDFPFKKKV.

It belongs to the universal ribosomal protein uL5 family. In terms of assembly, part of the 50S ribosomal subunit; part of the 5S rRNA/L5/L18/L25 subcomplex. Contacts the 5S rRNA and the P site tRNA. Forms a bridge to the 30S subunit in the 70S ribosome.

Functionally, this is one of the proteins that bind and probably mediate the attachment of the 5S RNA into the large ribosomal subunit, where it forms part of the central protuberance. In the 70S ribosome it contacts protein S13 of the 30S subunit (bridge B1b), connecting the 2 subunits; this bridge is implicated in subunit movement. Contacts the P site tRNA; the 5S rRNA and some of its associated proteins might help stabilize positioning of ribosome-bound tRNAs. The sequence is that of Large ribosomal subunit protein uL5 from Colwellia psychrerythraea (strain 34H / ATCC BAA-681) (Vibrio psychroerythus).